We begin with the raw amino-acid sequence, 178 residues long: Large ribosomal subunit protein uL10 (178 aa).

This sequence belongs to the universal ribosomal protein uL10 family. As to quaternary structure, part of the ribosomal stalk of the 50S ribosomal subunit. The N-terminus interacts with L11 and the large rRNA to form the base of the stalk. The C-terminus forms an elongated spine to which L12 dimers bind in a sequential fashion forming a multimeric L10(L12)X complex.

Its function is as follows. Forms part of the ribosomal stalk, playing a central role in the interaction of the ribosome with GTP-bound translation factors. The polypeptide is Large ribosomal subunit protein uL10 (Salinibacter ruber (strain DSM 13855 / M31)).